We begin with the raw amino-acid sequence, 309 residues long: 5-oxoprolinase subunit C (309 aa).

Belongs to the PxpC family. Forms a complex composed of PxpA, PxpB and PxpC.

The catalysed reaction is 5-oxo-L-proline + ATP + 2 H2O = L-glutamate + ADP + phosphate + H(+). Its function is as follows. Catalyzes the cleavage of 5-oxoproline to form L-glutamate coupled to the hydrolysis of ATP to ADP and inorganic phosphate. This is 5-oxoprolinase subunit C from Haemophilus influenzae (strain ATCC 51907 / DSM 11121 / KW20 / Rd).